A 175-amino-acid chain; its full sequence is Large ribosomal subunit protein uL10 (175 aa).

It belongs to the universal ribosomal protein uL10 family. Part of the ribosomal stalk of the 50S ribosomal subunit. The N-terminus interacts with L11 and the large rRNA to form the base of the stalk. The C-terminus forms an elongated spine to which L12 dimers bind in a sequential fashion forming a multimeric L10(L12)X complex.

Its function is as follows. Forms part of the ribosomal stalk, playing a central role in the interaction of the ribosome with GTP-bound translation factors. In Desulfotalea psychrophila (strain LSv54 / DSM 12343), this protein is Large ribosomal subunit protein uL10.